We begin with the raw amino-acid sequence, 128 residues long: Disintegrin lebein-2-alpha (128 aa).

The signal sequence occupies residues 1–20; the sequence is MIQVLLVTICLAVFPFHGSS. A propeptide spanning residues 21–46 is cleaved from the precursor; the sequence is IILESGNVNDYEVVYPKKVTLLPTGA. One can recognise a Disintegrin domain in the interval 47 to 111; the sequence is MNSANPCCDP…SDCPRNPWKS (65 aa). Intrachain disulfides connect C53–C76, C67–C73, C72–C97, and C85–C104. The Cell attachment site; atypical (MLD) motif lies at 89 to 91; that stretch reads MLD. The propeptide occupies 112 to 128; it reads EEDEMKWSATAKGSVLM.

This sequence belongs to the disintegrin family. Dimeric disintegrin subfamily. In terms of assembly, heterodimer with subunit beta; disulfide-linked. As to expression, expressed by the venom gland.

The protein resides in the secreted. Functionally, inhibits ADP-induced human platelet aggregation. Antagonist of alpha-IIb/beta-3 (ITGA2B/ITGB3). Also avidly binds to the laminin-binding beta-1 integrins (alpha-3/beta-1 (ITGA3/ITGB1), alpha-6/beta-1 (ITGA6/ITGB1), and alpha-7/beta-1 (ITGA7/ITGB1)) in an RGD-independent manner. In Macrovipera lebetinus (Levantine viper), this protein is Disintegrin lebein-2-alpha.